The following is a 135-amino-acid chain: Allatotropins (135 aa).

An N-terminal signal peptide occupies residues 1 to 22; sequence MNFSMHLVLAVAAAACLCVVTA. Phenylalanine 51 is subject to Phenylalanine amide. Positions 55–135 are excised as a propeptide; that stretch reads DRPHTRAELY…SSEELLRNVA (81 aa).

In terms of tissue distribution, allatotropin: Expressed in corpora cardiaca (CC), corpora allata (CA), antennal lobe (AL) and gnathal ganglion (GNG) (protein level). Expression in AL detected in all animals, expression in GNG detected in most animals and expression in CA and CC detected in few animals (at protein level). Allatotropin-PP-1: Expressed in corpora cardiaca (CC), corpora allata (CA), antennal lobe (AL) and gnathal ganglion (GNG) (at protein level). Expression in AL detected in all animals and expression in GNG, CA and CC detected in some animals (at protein level).

The protein localises to the secreted. Neuropeptide stimulator of juvenile hormone synthesis. This chain is Allatotropins, found in Agrotis ipsilon (Black cutworm moth).